The following is an 842-amino-acid chain: Follistatin-related protein 4 (842 aa).

Residues 1-22 (MKPGGFWLHLTLLGASLPAALG) form the signal peptide. Positions 81-135 (KTGEPECQCLEACRPSYVPVCGSDGRFYENHCKLHRAACLLGKRITVIHSKDCFL) constitute a Kazal-like domain. Disulfide bonds link Cys87–Cys119, Cys93–Cys112, and Cys101–Cys133. One can recognise an EF-hand domain in the interval 174–209 (QKRLLVESLFRDLDADGNGHLSSSELAQHVLKKQDL). Ca(2+) is bound by residues Asp187, Asp189, Asn191, His193, and Glu198. Ig-like domains lie at 251-338 (PEDR…LQVN) and 341-426 (PVIR…EDIS). Cystine bridges form between Cys270-Cys321 and Cys362-Cys413. N-linked (GlcNAc...) asparagine glycosylation is present at Asn318.

It is found in the secreted. This chain is Follistatin-related protein 4 (FSTL4), found in Homo sapiens (Human).